A 397-amino-acid chain; its full sequence is L-rhamnonate dehydratase (397 aa).

Substrate is bound by residues His-25 and Arg-51. 3 residues coordinate Mg(2+): Asp-217, Glu-243, and Glu-271. The Proton acceptor role is filled by His-321. Residue Glu-341 participates in substrate binding.

This sequence belongs to the mandelate racemase/muconate lactonizing enzyme family. RhamD subfamily. As to quaternary structure, homooctamer; tetramer of dimers. The cofactor is Mg(2+).

The catalysed reaction is L-rhamnonate = 2-dehydro-3-deoxy-L-rhamnonate + H2O. It participates in carbohydrate degradation; L-rhamnose degradation. Its function is as follows. Catalyzes the dehydration of L-rhamnonate to 2-keto-3-deoxy-L-rhamnonate (KDR). Also shows activity with L-lyxonate and L-mannonate, with much lower catalytic efficiency. Catalyzes the third step in an alternative pathway for rhamnose utilization that does not involve phosphorylated intermediates. This Sphingomonas sp. (strain SKA58) protein is L-rhamnonate dehydratase.